Consider the following 212-residue polypeptide: MRRVLLCFLTLILLLPAASALRNPSAVYCEAMGYNYVIFSSPYGDVGKCVLPNGEAVNAWDFYRGVVALEYSYCAKQGYEAKHVEREDCKSCLVCVLPDGREVEVAELMGLSFEETTCGDGVCGIPENYSSCPQDCSSGEEDGYCDAVKDGICDPDCTKGEDADCAENLEGGATTVTATTITPSEVKRTPGFEALEVLAALALVLAVSRRRI.

The signal sequence occupies residues 1-20 (MRRVLLCFLTLILLLPAASA).

This is an uncharacterized protein from Archaeoglobus fulgidus (strain ATCC 49558 / DSM 4304 / JCM 9628 / NBRC 100126 / VC-16).